Reading from the N-terminus, the 271-residue chain is CAAX prenyl protease 2 (271 aa).

Over 1-9 the chain is Extracellular; that stretch reads MISSYKYNP. A helical transmembrane segment spans residues 10-30; it reads KLYFLSTFVVTYILWFTGAYL. Topologically, residues 31-38 are cytoplasmic; it reads SFSSTYSG. A helical membrane pass occupies residues 39 to 59; that stretch reads IYMLIMLPGLMAPFIISTILI. At 60–82 the chain is on the extracellular side; sequence AKSKNNELKKDFINRLFNLKLIN. Residues 83–105 traverse the membrane as a helical segment; it reads LKTIPVVFLLMPAVILLSILLSI. The Cytoplasmic segment spans residues 106-125; sequence PFGGSISQFQFSGGFSFSTD. A helical transmembrane segment spans residues 126 to 149; it reads FVPVLFLLLLAATFEELGWRGYAF. The Proton donor/acceptor role is filled by Glu-140. The Extracellular segment spans residues 150–159; the sequence is DSLQSRYSLF. Residues 160–179 traverse the membrane as a helical segment; that stretch reads KASILFGIFWSLWHFPLIFV. His-173 functions as the Proton donor/acceptor in the catalytic mechanism. The Cytoplasmic segment spans residues 180-192; that stretch reads NNSYQYEIFNQSI. Residues 193-213 form a helical membrane-spanning segment; the sequence is WYGLNFFLSILPMGIIITWMC. Over 214–219 the chain is Extracellular; that stretch reads LKNRKS. Residues 220–237 traverse the membrane as a helical segment; that stretch reads IILAIIFHFLINLNQELL. Residues 238 to 243 lie on the Cytoplasmic side of the membrane; the sequence is AITQDT. The helical transmembrane segment at 244-263 threads the bilayer; the sequence is KIIETGVLFLVAAAIILYDK. Topologically, residues 264–271 are extracellular; that stretch reads KMFFEKLG.

It belongs to the peptidase U48 family.

The protein resides in the cell membrane. It catalyses the reaction Hydrolyzes the peptide bond -P2-(S-farnesyl or geranylgeranyl)C-P1'-P2'-P3'-COOH where P1' and P2' are amino acids with aliphatic sidechains and P3' is any C-terminal residue.. Its activity is regulated as follows. Activity is unaffected by metalloprotease inhibitors 5 mM EDTA and 5 mM Zn(2+). Activity partially inhibited by 1,10-phenanthroline and 1,7-phenanthroline. In terms of biological role, protease involved in the processing of a variety of prenylated proteins containing the C-terminal CAAX motif, where C is a cysteine modified with an isoprenoid lipid, A is an aliphatic amino acid and X is any C-terminal amino acid. Proteolytically removes the C-terminal three residues of farnesylated proteins, leaving the prenylated cysteine as the new C-terminus. Hydrolysis depends on a farnesylated cysteine residue and no activity is shown towards geranylgeranylated peptides. In Methanococcus maripaludis (strain DSM 14266 / JCM 13030 / NBRC 101832 / S2 / LL), this protein is CAAX prenyl protease 2.